Reading from the N-terminus, the 114-residue chain is Ribonuclease P protein component (114 aa).

Belongs to the RnpA family. In terms of assembly, consists of a catalytic RNA component (M1 or rnpB) and a protein subunit.

The catalysed reaction is Endonucleolytic cleavage of RNA, removing 5'-extranucleotides from tRNA precursor.. RNaseP catalyzes the removal of the 5'-leader sequence from pre-tRNA to produce the mature 5'-terminus. It can also cleave other RNA substrates such as 4.5S RNA. The protein component plays an auxiliary but essential role in vivo by binding to the 5'-leader sequence and broadening the substrate specificity of the ribozyme. The polypeptide is Ribonuclease P protein component (Legionella pneumophila (strain Paris)).